Here is a 1315-residue protein sequence, read N- to C-terminus: ESX secretion system protein EccC (1315 aa).

The segment covering Met1–Arg11 has biased composition (basic residues). Residues Met1–Glu21 form a disordered region. The Cytoplasmic segment spans residues Met1 to Asn40. A helical transmembrane segment spans residues Val41 to His61. Topologically, residues Arg62–Thr64 are extracellular. Residues Leu65 to Leu85 traverse the membrane as a helical segment. The Cytoplasmic segment spans residues Ser86–Ser1315. FtsK domains follow at residues Gly456 to Arg656 and Arg813 to Glu1004. ATP is bound at residue Gly479–Ser486. Residue Glu593 is part of the active site. The tract at residues Arg721 to Ser1315 is binds EsxB. Residues Gln834–Thr839, Thr1031, Glu1119–Asn1124, Gln1293, and Thr1310–Ala1311 contribute to the ATP site. One can recognise a FtsK 3 domain in the interval Leu1099–Leu1282.

The cytosolic domain can form homodimers. Binds EsxB, which leads to multimerization, however EsxA disassembles the multimers, possibly by making EccC-EsxA-EsxB trimers instead of EccC-EsxB-EsxB-EccC tetramers. Forms a complex with EsxA and EsxB, probably wholly mediated by EsxB.

It localises to the cell membrane. With respect to regulation, esxB binding to the third FtsK domain causes multimerization; a subsequent unknown step relieves the allosteric inhibition of linker 2 on FtsK domain 1, activating the ATPase activity; a mutant EsxB ('Ala-98') does not cause multimers to form. Its function is as follows. Part of the ESX specialized secretion system, which exports proteins from the cell including EsxA (ESAT-6) and EsxB (CFP-10). Has weak intrinsic ATPase activity; probably only the first FtsK domain can hydrolyze ATP. Might be the translocase subunit. The polypeptide is ESX secretion system protein EccC (Thermomonospora curvata (strain ATCC 19995 / DSM 43183 / JCM 3096 / KCTC 9072 / NBRC 15933 / NCIMB 10081 / Henssen B9)).